The sequence spans 337 residues: Methionyl-tRNA formyltransferase (337 aa).

110-113 (SLLP) provides a ligand contact to (6S)-5,6,7,8-tetrahydrofolate.

It belongs to the Fmt family.

The enzyme catalyses L-methionyl-tRNA(fMet) + (6R)-10-formyltetrahydrofolate = N-formyl-L-methionyl-tRNA(fMet) + (6S)-5,6,7,8-tetrahydrofolate + H(+). In terms of biological role, attaches a formyl group to the free amino group of methionyl-tRNA(fMet). The formyl group appears to play a dual role in the initiator identity of N-formylmethionyl-tRNA by promoting its recognition by IF2 and preventing the misappropriation of this tRNA by the elongation apparatus. The sequence is that of Methionyl-tRNA formyltransferase from Frankia casuarinae (strain DSM 45818 / CECT 9043 / HFP020203 / CcI3).